We begin with the raw amino-acid sequence, 451 residues long: Bifunctional protein GlmU (451 aa).

The interval 1–225 (MVVVAILAAG…YQEILGINDR (225 aa)) is pyrophosphorylase. UDP-N-acetyl-alpha-D-glucosamine contacts are provided by residues 7–10 (LAAG), K21, Q72, and 77–78 (GT). D102 serves as a coordination point for Mg(2+). UDP-N-acetyl-alpha-D-glucosamine-binding residues include G139, E154, N169, and N223. Mg(2+) is bound at residue N223. The interval 226-246 (LQLATAYEILQRRVKEQWMMA) is linker. The interval 247–451 (GVTLIDPNSI…LGWRRKSGES (205 aa)) is N-acetyltransferase. 2 residues coordinate UDP-N-acetyl-alpha-D-glucosamine: R328 and K346. The active-site Proton acceptor is the H358. UDP-N-acetyl-alpha-D-glucosamine is bound by residues Y361 and N372. Residues A375, 381–382 (NY), S400, A418, and R435 each bind acetyl-CoA.

In the N-terminal section; belongs to the N-acetylglucosamine-1-phosphate uridyltransferase family. The protein in the C-terminal section; belongs to the transferase hexapeptide repeat family. As to quaternary structure, homotrimer. Requires Mg(2+) as cofactor.

The protein localises to the cytoplasm. It carries out the reaction alpha-D-glucosamine 1-phosphate + acetyl-CoA = N-acetyl-alpha-D-glucosamine 1-phosphate + CoA + H(+). The enzyme catalyses N-acetyl-alpha-D-glucosamine 1-phosphate + UTP + H(+) = UDP-N-acetyl-alpha-D-glucosamine + diphosphate. It functions in the pathway nucleotide-sugar biosynthesis; UDP-N-acetyl-alpha-D-glucosamine biosynthesis; N-acetyl-alpha-D-glucosamine 1-phosphate from alpha-D-glucosamine 6-phosphate (route II): step 2/2. The protein operates within nucleotide-sugar biosynthesis; UDP-N-acetyl-alpha-D-glucosamine biosynthesis; UDP-N-acetyl-alpha-D-glucosamine from N-acetyl-alpha-D-glucosamine 1-phosphate: step 1/1. Its pathway is bacterial outer membrane biogenesis; LPS lipid A biosynthesis. Its function is as follows. Catalyzes the last two sequential reactions in the de novo biosynthetic pathway for UDP-N-acetylglucosamine (UDP-GlcNAc). The C-terminal domain catalyzes the transfer of acetyl group from acetyl coenzyme A to glucosamine-1-phosphate (GlcN-1-P) to produce N-acetylglucosamine-1-phosphate (GlcNAc-1-P), which is converted into UDP-GlcNAc by the transfer of uridine 5-monophosphate (from uridine 5-triphosphate), a reaction catalyzed by the N-terminal domain. The protein is Bifunctional protein GlmU of Nostoc sp. (strain PCC 7120 / SAG 25.82 / UTEX 2576).